Consider the following 686-residue polypeptide: Methionine--tRNA ligase (686 aa).

The 'HIGH' region signature appears at 15–25 (PYANGSIHLGH). 4 residues coordinate Zn(2+): cysteine 146, cysteine 149, cysteine 159, and cysteine 162. The 'KMSKS' region motif lies at 332–336 (KMSKS). Residue lysine 335 participates in ATP binding. Residues 585–686 (AFAAVDMRIA…EGAQPGMRVM (102 aa)) form the tRNA-binding domain.

This sequence belongs to the class-I aminoacyl-tRNA synthetase family. MetG type 1 subfamily. In terms of assembly, homodimer. It depends on Zn(2+) as a cofactor.

It localises to the cytoplasm. The catalysed reaction is tRNA(Met) + L-methionine + ATP = L-methionyl-tRNA(Met) + AMP + diphosphate. Its function is as follows. Is required not only for elongation of protein synthesis but also for the initiation of all mRNA translation through initiator tRNA(fMet) aminoacylation. This is Methionine--tRNA ligase from Vibrio campbellii (strain ATCC BAA-1116).